A 359-amino-acid polypeptide reads, in one-letter code: tRNA N6-adenosine threonylcarbamoyltransferase (359 aa).

Positions 115 and 119 each coordinate Fe cation. Substrate-binding positions include 137–141 (LVSGG), D170, G183, and N283. Position 311 (D311) interacts with Fe cation. The segment at 328–359 (APDSLDIAPRSRWPLDEKSAPVFGTGRRGAKA) is disordered.

Belongs to the KAE1 / TsaD family. Fe(2+) is required as a cofactor.

It localises to the cytoplasm. The enzyme catalyses L-threonylcarbamoyladenylate + adenosine(37) in tRNA = N(6)-L-threonylcarbamoyladenosine(37) in tRNA + AMP + H(+). Required for the formation of a threonylcarbamoyl group on adenosine at position 37 (t(6)A37) in tRNAs that read codons beginning with adenine. Is involved in the transfer of the threonylcarbamoyl moiety of threonylcarbamoyl-AMP (TC-AMP) to the N6 group of A37, together with TsaE and TsaB. TsaD likely plays a direct catalytic role in this reaction. This is tRNA N6-adenosine threonylcarbamoyltransferase from Brucella abortus (strain S19).